A 253-amino-acid polypeptide reads, in one-letter code: Proteasome subunit alpha type-7 (253 aa).

The protein belongs to the peptidase T1A family. The 26S proteasome consists of a 20S proteasome core and two 19S regulatory subunits. The 20S proteasome core is composed of 28 subunits that are arranged in four stacked rings, resulting in a barrel-shaped structure. The two end rings are each formed by seven alpha subunits, and the two central rings are each formed by seven beta subunits. The catalytic chamber with the active sites is on the inside of the barrel.

It is found in the cytoplasm. Its subcellular location is the nucleus. In terms of biological role, the proteasome is a multicatalytic proteinase complex which is characterized by its ability to cleave peptides with Arg, Phe, Tyr, Leu, and Glu adjacent to the leaving group at neutral or slightly basic pH. The proteasome has an ATP-dependent proteolytic activity. The protein is Proteasome subunit alpha type-7 (pas-4) of Caenorhabditis elegans.